Here is a 439-residue protein sequence, read N- to C-terminus: Xylose isomerase (439 aa).

Active-site residues include His101 and Asp104. The Mg(2+) site is built by Glu232, Glu268, His271, Asp296, Asp307, Asp309, and Asp339.

The protein belongs to the xylose isomerase family. In terms of assembly, homotetramer. The cofactor is Mg(2+).

Its subcellular location is the cytoplasm. The enzyme catalyses alpha-D-xylose = alpha-D-xylulofuranose. In Photorhabdus laumondii subsp. laumondii (strain DSM 15139 / CIP 105565 / TT01) (Photorhabdus luminescens subsp. laumondii), this protein is Xylose isomerase.